The chain runs to 338 residues: tRNA-specific 2-thiouridylase MnmA (338 aa).

Residues 6–13 (AMSGGVDS) and Met-32 each bind ATP. Cys-92 functions as the Nucleophile in the catalytic mechanism. An intrachain disulfide couples Cys-92 to Cys-186. Gly-116 serves as a coordination point for ATP. The interval 134–136 (KDQ) is interaction with tRNA. The Cysteine persulfide intermediate role is filled by Cys-186. Residues 288 to 289 (RY) form an interaction with tRNA region.

It belongs to the MnmA/TRMU family.

Its subcellular location is the cytoplasm. The enzyme catalyses S-sulfanyl-L-cysteinyl-[protein] + uridine(34) in tRNA + AH2 + ATP = 2-thiouridine(34) in tRNA + L-cysteinyl-[protein] + A + AMP + diphosphate + H(+). Its function is as follows. Catalyzes the 2-thiolation of uridine at the wobble position (U34) of tRNA, leading to the formation of s(2)U34. This is tRNA-specific 2-thiouridylase MnmA from Campylobacter jejuni subsp. jejuni serotype O:6 (strain 81116 / NCTC 11828).